The following is a 300-amino-acid chain: tRNA dimethylallyltransferase (300 aa).

Position 11–18 (11–18 (GPTAVGKS)) interacts with ATP. A substrate-binding site is contributed by 13–18 (TAVGKS). The segment at 35–38 (DSIQ) is interaction with substrate tRNA.

This sequence belongs to the IPP transferase family. In terms of assembly, monomer. Mg(2+) serves as cofactor.

It carries out the reaction adenosine(37) in tRNA + dimethylallyl diphosphate = N(6)-dimethylallyladenosine(37) in tRNA + diphosphate. Catalyzes the transfer of a dimethylallyl group onto the adenine at position 37 in tRNAs that read codons beginning with uridine, leading to the formation of N6-(dimethylallyl)adenosine (i(6)A). This Borrelia turicatae (strain 91E135) protein is tRNA dimethylallyltransferase.